A 350-amino-acid polypeptide reads, in one-letter code: Dauer larva development regulatory growth factor daf-7 (350 aa).

The N-terminal stretch at 1–21 is a signal peptide; sequence MFMASSLPVFIFLLSLPHGLT. Positions 22-234 are excised as a propeptide; the sequence is FNCTNSGVCI…TRPKGSRKRR (213 aa). N23 carries an N-linked (GlcNAc...) asparagine glycan. 4 disulfides stabilise this stretch: C241–C251, C250–C315, C278–C347, and C282–C349.

Belongs to the TGF-beta family. In terms of tissue distribution, expressed in the chemosensory neurons, including in the ASJ neurons in males. Expressed in the ASI neurons.

The protein localises to the secreted. Its function is as follows. Under harsh environmental conditions, larvae enter a developmentally arrested state known as dauer; TGF-beta-like daf-7 acts to inhibit dauer larva formation and promote growth. May be a ligand to cell surface receptor daf-4. May act as a negative regulator of dauer larva development by transducing chemosensory information from ASI neurons. Involved in sensitivity to CO2 levels. Involved in mate searching behavior of males, acting in concert with the neuropeptide pdf-1. In AWC neurons, acts to promote expression of srsx-3, a member of the GPCR family. The polypeptide is Dauer larva development regulatory growth factor daf-7 (Caenorhabditis elegans).